A 181-amino-acid chain; its full sequence is CASP-like protein 2C1 (181 aa).

At 1-7 (MALEIPK) the chain is on the cytoplasmic side. A helical transmembrane segment spans residues 8–28 (IEAILRGIAILLLVSTACLVG). The Extracellular segment spans residues 29–49 (LDSQTKFVIVYEKEVTYKDLH). Residues 50 to 70 (ALVVLVYVDAVAAAYNLLQLC) form a helical membrane-spanning segment. Residues 71 to 98 (RCSVSALSKGNFKGSYRYLSWACFVLDQ) lie on the Cytoplasmic side of the membrane. The chain crosses the membrane as a helical span at residues 99–119 (LAAYTTFAAHSAALQHSVLGI). The Extracellular segment spans residues 120–140 (TGAKVFQWMKWCNRFTRFCFQ). Residues 141-161 (IGGALTCGYIASVLMVMISFI) traverse the membrane as a helical segment. Residues 162 to 181 (SAFNLFRLYSPKHFLRLKGT) lie on the Cytoplasmic side of the membrane.

The protein belongs to the Casparian strip membrane proteins (CASP) family. As to quaternary structure, homodimer and heterodimers.

Its subcellular location is the cell membrane. The sequence is that of CASP-like protein 2C1 from Populus trichocarpa (Western balsam poplar).